Consider the following 393-residue polypeptide: MLSAEHRAIVKATVPLLESGGEALTTHFYKTMLAEYPSVRPLFNQAHQQSGDQPRALANAVLMYARHIDQLEQLGGLVSQIVNKHVALNILPEHYPIVGACLLRAIREVLGAEIATDAVIEAWGAAYQQLADLLIGLEENVYVEKETATGGWRGTRAFVVARKVKESDEITSFYLRPADGGELLEFHPGQYIGLKLIVDGEEIRRNYSLSAAANGREYRISVKREPNGKASNYLHDSVNEGATLDLLTPSGDFTLEHNDKPLVLISGGVGITPTLAMLNAALQTSRPIHFIHATRHGGVHAFRDHIDELAARHPQLKRFYVYEKPRHDDEAHHAEGYIDEARLIEWLPATRDVDVYFLGPKSFMQAVKRHLKTIGVPEKQSRYEFFGPASALD.

In terms of domain architecture, Globin spans 1-139 (MLSAEHRAIV…LADLLIGLEE (139 aa)). His85 contacts heme b. Active-site charge relay system residues include Tyr95 and Glu138. Residues 150-393 (GGWRGTRAFV…EFFGPASALD (244 aa)) form a reductase region. Residues 153–256 (RGTRAFVVAR…LTPSGDFTLE (104 aa)) form the FAD-binding FR-type domain. FAD contacts are provided by residues Tyr191 and 205-208 (RNYS). Residue 268 to 273 (GVGITP) coordinates NADP(+). 385–388 (FFGP) is an FAD binding site.

It belongs to the globin family. Two-domain flavohemoproteins subfamily. In the C-terminal section; belongs to the flavoprotein pyridine nucleotide cytochrome reductase family. The cofactor is heme b. FAD is required as a cofactor.

It carries out the reaction 2 nitric oxide + NADPH + 2 O2 = 2 nitrate + NADP(+) + H(+). The catalysed reaction is 2 nitric oxide + NADH + 2 O2 = 2 nitrate + NAD(+) + H(+). In terms of biological role, is involved in NO detoxification in an aerobic process, termed nitric oxide dioxygenase (NOD) reaction that utilizes O(2) and NAD(P)H to convert NO to nitrate, which protects the bacterium from various noxious nitrogen compounds. Therefore, plays a central role in the inducible response to nitrosative stress. This Burkholderia sp. (strain TH2) protein is Flavohemoprotein.